The sequence spans 438 residues: Cell division cycle-associated 7-like protein (438 aa).

An Integrase domain-binding motif 1 (IBM1) motif is present at residues 9–33; the sequence is IPKEVADIFNAPSDDEEFVGFQDDV. Ser21 is subject to Phosphoserine. The tract at residues 55-114 is PSIP1-binding; the sequence is ACLHSKYFTEELRRIFKEDTDSDNEDFEGFTESELNIGSNPELIESELSDGDKTHPMMSD. The Integrase domain-binding motif 2 (IBM2) signature appears at 62–88; the sequence is FTEELRRIFKEDTDSDNEDFEGFTESE. The disordered stretch occupies residues 72–199; it reads EDTDSDNEDF…ESRAESQETS (128 aa). A Phosphothreonine modification is found at Thr74. Positions 74–85 are enriched in acidic residues; sequence TDSDNEDFEGFT. Residue Ser76 is modified to Phosphoserine. Residue Thr85 is modified to Phosphothreonine. Residues Ser100, Ser103, Ser113, Ser135, Ser136, Ser183, and Ser185 each carry the phosphoserine modification. The segment covering 113–123 has biased composition (acidic residues); it reads SDEEDDDDEEE. Positions 166-183 are enriched in basic and acidic residues; it reads TDLRREKSCRQPKEKEDS. Residues 201–223 form an MYC-binding region; it reads ALLKRAMNIKENKAMLAQLLAEL. Residues Lys210 and Lys213 each participate in a glycyl lysine isopeptide (Lys-Gly) (interchain with G-Cter in SUMO2) cross-link. A Phosphoserine modification is found at Ser249.

As to quaternary structure, interacts with MYC. Interacts (via IBM motifs) with PSIP1 (via IBD domain); phosphorylation increases its affinity for PSIP1. In terms of processing, phosphorylation increases its interaction with PSIP1.

It is found in the cytoplasm. Its subcellular location is the nucleus. Plays a role in transcriptional regulation as a repressor that inhibits monoamine oxidase A (MAOA) activity and gene expression by binding to the promoter. Plays an important oncogenic role in mediating the full transforming effect of MYC in medulloblastoma cells. Involved in apoptotic signaling pathways; May act downstream of P38-kinase and BCL-2, but upstream of CASP3/caspase-3 as well as CCND1/cyclin D1 and E2F1. The polypeptide is Cell division cycle-associated 7-like protein (Cdca7l) (Rattus norvegicus (Rat)).